Here is a 965-residue protein sequence, read N- to C-terminus: Collagen alpha-1(I) chain (965 aa).

A compositionally biased stretch (pro residues) spans S1–G21. The tract at residues S1–P965 is disordered. P15, P18, P20, P29, P32, P35, P49, P64, P70, P79, and P85 each carry 4-hydroxyproline. Over residues N52–E66 the composition is skewed to basic and acidic residues. K88 bears the 5-hydroxylysine; alternate mark. A glycan (O-linked (Gal...) hydroxylysine; alternate) is linked at K88. S94 bears the Phosphoserine mark. Residues D102 to N118 show a composition bias toward low complexity. 4-hydroxyproline occurs at positions 112, 115, 121, 130, 136, 157, 166, 169, 196, 199, 211, 217, 226, 232, 235, and 250. Positions P136 to A154 are enriched in low complexity. The span at P156–F168 shows a compositional bias: pro residues. A compositionally biased stretch (low complexity) spans A202–S241. 5-hydroxylysine is present on K253. 4-hydroxyproline is present on residues P259, P262, P273, P282, P297, P303, P312, and P318. Residues G307–G327 are compositionally biased toward gly residues. K326 bears the 5-hydroxylysine mark. A 4-hydroxyproline mark is found at P335, P344, P350, P356, P365, P368, P377, P386, P392, P404, P413, P422, P425, P443, P460, P466, P472, P480, P492, P501, P509, P515, and P524. A compositionally biased stretch (low complexity) spans K359–R385. A compositionally biased stretch (low complexity) spans A394–P413. The segment covering P472 to P482 has biased composition (low complexity). K536 is modified (5-hydroxylysine). 4-hydroxyproline occurs at positions 542, 557, and 563. Residues S569 to A583 show a composition bias toward low complexity. Residue S572 is modified to Phosphoserine. Residues P584, P590, P593, P602, P608, P626, P635, and P644 each carry the 4-hydroxyproline modification. Over residues A596 to A623 the composition is skewed to low complexity. Residues P625–P637 are compositionally biased toward pro residues. K647 is subject to 5-hydroxylysine. Low complexity predominate over residues S652–V668. P656 and P662 each carry 4-hydroxyproline. The residue at position 670 (P670) is a 3-hydroxyproline. 16 positions are modified to 4-hydroxyproline: P671, P680, P683, P704, P713, P721, P730, P748, P757, P760, P766, P771, P777, P783, P791, and P797. Residues E697–E706 are compositionally biased toward low complexity. The segment covering K718–P730 has biased composition (low complexity). Residues K768–A780 show a composition bias toward pro residues. At K806 the chain carries 5-hydroxylysine. Over residues S815–V830 the composition is skewed to pro residues. 4-hydroxyproline is present on residues P818, P821, and P824. Over residues A851 to P865 the composition is skewed to low complexity. The span at R866–I880 shows a compositional bias: basic and acidic residues. Residue K869 is modified to 5-hydroxylysine. K881 is subject to 5-hydroxylysine; alternate. A glycan (O-linked (Gal...) hydroxylysine; alternate) is linked at K881. 4-hydroxyproline is present on residues P896, P899, P917, and P932. Residues P899–P932 are compositionally biased toward low complexity. P937 bears the 3-hydroxyproline mark. The residue at position 938 (P938) is a 4-hydroxyproline. Residues V950 to P965 show a composition bias toward pro residues. Position 952 is a 3-hydroxyproline (P952). At P953 the chain carries 4-hydroxyproline. The residue at position 955 (P955) is a 3-hydroxyproline. P956 is subject to 4-hydroxyproline. P958 carries the 3-hydroxyproline modification. 4-hydroxyproline is present on residues P959, P962, and P965.

The protein belongs to the fibrillar collagen family. Trimers of one alpha 2(I) and two alpha 1(I) chains. In terms of processing, contains mostly 4-hydroxyproline. Proline residues at the third position of the tripeptide repeating unit (G-X-Y) are hydroxylated in some or all of the chains. Post-translationally, contains 3-hydroxyproline at a few sites. This modification occurs on the first proline residue in the sequence motif Gly-Pro-Hyp, where Hyp is 4-hydroxyproline. Lysine residues at the third position of the tripeptide repeating unit (G-X-Y) are 5-hydroxylated in some or all of the chains. In terms of processing, O-glycosylated on hydroxylated lysine residues. The O-linked glycan consists of a Glc-Gal disaccharide. Expressed in bones.

It is found in the secreted. It localises to the extracellular space. Its subcellular location is the extracellular matrix. In terms of biological role, type I collagen is a member of group I collagen (fibrillar forming collagen). The chain is Collagen alpha-1(I) chain from Scelidotherium sp. (strain SLP-2019) (South American ground sloth).